A 157-amino-acid polypeptide reads, in one-letter code: MIRIGQGYDVHKLDYDRELIIGGIKIPYEKGLLGHSDADVLLHAITDAIIGAIGALDIGHFFPDTDMAYKDADSAELLAEIWRQVEAEGFKLGNLDATIIAEKPKMAPYVELMKRRIAELLHAEPSQVNVKATTTEKLGFTGREEGIASLAVVLLEK.

Residues Asp9 and His11 each contribute to the a divalent metal cation site. 4-CDP-2-C-methyl-D-erythritol 2-phosphate contacts are provided by residues 9–11 (DVH) and 35–36 (HS). His43 contacts a divalent metal cation. 4-CDP-2-C-methyl-D-erythritol 2-phosphate-binding positions include 57–59 (DIG), 62–66 (FPDTD), 101–107 (AEKPKMA), 133–136 (TTTE), Phe140, and Arg143.

The protein belongs to the IspF family. As to quaternary structure, homotrimer. It depends on a divalent metal cation as a cofactor.

The catalysed reaction is 4-CDP-2-C-methyl-D-erythritol 2-phosphate = 2-C-methyl-D-erythritol 2,4-cyclic diphosphate + CMP. It functions in the pathway isoprenoid biosynthesis; isopentenyl diphosphate biosynthesis via DXP pathway; isopentenyl diphosphate from 1-deoxy-D-xylulose 5-phosphate: step 4/6. In terms of biological role, involved in the biosynthesis of isopentenyl diphosphate (IPP) and dimethylallyl diphosphate (DMAPP), two major building blocks of isoprenoid compounds. Catalyzes the conversion of 4-diphosphocytidyl-2-C-methyl-D-erythritol 2-phosphate (CDP-ME2P) to 2-C-methyl-D-erythritol 2,4-cyclodiphosphate (ME-CPP) with a corresponding release of cytidine 5-monophosphate (CMP). In Listeria innocua serovar 6a (strain ATCC BAA-680 / CLIP 11262), this protein is 2-C-methyl-D-erythritol 2,4-cyclodiphosphate synthase.